The following is a 317-amino-acid chain: UV DNA damage endonuclease (317 aa).

Belongs to the uve1/UvsE family.

Its function is as follows. Component in a DNA repair pathway. Removal of UV LIGHT damaged nucleotides. Recognizes pyrimidine dimers and cleave a phosphodiester bond immediately 5' to the lesion. This Bacillus anthracis (strain A0248) protein is UV DNA damage endonuclease.